We begin with the raw amino-acid sequence, 243 residues long: 6-carboxyhexanoate--CoA ligase (243 aa).

It belongs to the BioW family. In terms of assembly, homodimer. Requires Mg(2+) as cofactor.

The enzyme catalyses heptanedioate + ATP + CoA = 6-carboxyhexanoyl-CoA + AMP + diphosphate. Its pathway is metabolic intermediate metabolism; pimeloyl-CoA biosynthesis; pimeloyl-CoA from pimelate: step 1/1. Its function is as follows. Catalyzes the transformation of pimelate into pimeloyl-CoA with concomitant hydrolysis of ATP to AMP. This is 6-carboxyhexanoate--CoA ligase from Thermocrinis albus (strain DSM 14484 / JCM 11386 / HI 11/12).